Here is a 211-residue protein sequence, read N- to C-terminus: Urease accessory protein UreG (211 aa).

Position 11–18 (glycine 11–threonine 18) interacts with GTP.

Belongs to the SIMIBI class G3E GTPase family. UreG subfamily. In terms of assembly, homodimer. UreD, UreF and UreG form a complex that acts as a GTP-hydrolysis-dependent molecular chaperone, activating the urease apoprotein by helping to assemble the nickel containing metallocenter of UreC. The UreE protein probably delivers the nickel.

It localises to the cytoplasm. In terms of biological role, facilitates the functional incorporation of the urease nickel metallocenter. This process requires GTP hydrolysis, probably effectuated by UreG. This chain is Urease accessory protein UreG, found in Actinobacillus pleuropneumoniae (Haemophilus pleuropneumoniae).